The sequence spans 1180 residues: Tudor domain-containing protein 1 (1180 aa).

2 disordered regions span residues 1-66 (MSVK…KKNN) and 79-138 (SQED…RPAK). Residues 27–41 (NFEKNENKLPPHESL) show a composition bias toward basic and acidic residues. Polar residues-rich tracts occupy residues 79–91 (SQED…NPNG) and 110–122 (NSVS…SNSP). Cys-170, Cys-173, Cys-181, Cys-184, Cys-190, Cys-194, His-202, and Cys-206 together coordinate Zn(2+). Residues 170 to 206 (CHRCGLFGSLRCSQCKQTYYCSTACQRRDWSAHSIVC) form an MYND-type zinc finger. Residues 312 to 372 (IPVKGEVCIA…YHLNRNIDLF (61 aa)) enclose the Tudor 1 domain. Positions 450–469 (SGQDSKKENADQSDPEDVGK) are disordered. Tudor domains follow at residues 541–600 (YPAI…LLEL), 762–821 (KAEI…FLNL), and 990–1048 (RPRI…HLAL).

The protein belongs to the TDRD1 family. Found in a mRNP complex, at least composed of TDRD1, TDRD6, TDRD7 and DDX4. Interacts with MAEL. Interacts with PIWIL1, PIWIL2 and PIWIL4 (when methylated on arginine residues). Interacts with TDRD12. As to expression, testis and ovary specific. Also expressed in several cancers.

The protein localises to the cytoplasm. In terms of biological role, plays a central role during spermatogenesis by participating in the repression transposable elements and preventing their mobilization, which is essential for the germline integrity. Acts via the piRNA metabolic process, which mediates the repression of transposable elements during meiosis by forming complexes composed of piRNAs and Piwi proteins and governs the methylation and subsequent repression of transposons. Required for the localization of Piwi proteins to the meiotic nuage. Involved in the piRNA metabolic process by ensuring the entry of correct transcripts into the normal piRNA pool and limiting the entry of cellular transcripts into the piRNA pathway. May act by allowing the recruitment of piRNA biogenesis or loading factors that ensure the correct entry of transcripts and piRNAs into Piwi proteins. This chain is Tudor domain-containing protein 1 (TDRD1), found in Homo sapiens (Human).